A 422-amino-acid polypeptide reads, in one-letter code: Enolase (422 aa).

Glutamine 162 contributes to the (2R)-2-phosphoglycerate binding site. Glutamate 204 functions as the Proton donor in the catalytic mechanism. Aspartate 241, glutamate 284, and aspartate 311 together coordinate Mg(2+). 4 residues coordinate (2R)-2-phosphoglycerate: lysine 336, arginine 365, serine 366, and lysine 387. The Proton acceptor role is filled by lysine 336.

It belongs to the enolase family. Component of the RNA degradosome, a multiprotein complex involved in RNA processing and mRNA degradation. It depends on Mg(2+) as a cofactor.

The protein resides in the cytoplasm. Its subcellular location is the secreted. The protein localises to the cell surface. It catalyses the reaction (2R)-2-phosphoglycerate = phosphoenolpyruvate + H2O. It functions in the pathway carbohydrate degradation; glycolysis; pyruvate from D-glyceraldehyde 3-phosphate: step 4/5. Functionally, catalyzes the reversible conversion of 2-phosphoglycerate (2-PG) into phosphoenolpyruvate (PEP). It is essential for the degradation of carbohydrates via glycolysis. The protein is Enolase of Legionella pneumophila (strain Corby).